The sequence spans 238 residues: Probable transcriptional regulatory protein SPH_2064 (238 aa).

Belongs to the TACO1 family. YeeN subfamily.

Its subcellular location is the cytoplasm. The sequence is that of Probable transcriptional regulatory protein SPH_2064 from Streptococcus pneumoniae (strain Hungary19A-6).